Here is a 134-residue protein sequence, read N- to C-terminus: Large ribosomal subunit protein eL14z (134 aa).

Belongs to the eukaryotic ribosomal protein eL14 family.

The sequence is that of Large ribosomal subunit protein eL14z (RPL14A) from Arabidopsis thaliana (Mouse-ear cress).